A 1649-amino-acid polypeptide reads, in one-letter code: PHD and RING finger domain-containing protein 1 (1649 aa).

The segment at Met-1 to Asp-79 is disordered. The residue at position 5 (Ser-5) is a Phosphoserine. Acidic residues predominate over residues Thr-54 to Asp-79. The RING-type; degenerate zinc-finger motif lies at Cys-108 to Arg-149. The PHD-type zinc finger occupies Pro-183 to Pro-233. The segment at Val-324 to Gly-398 is disordered. A Phosphothreonine modification is found at Thr-330. The segment covering Pro-334–Thr-353 has biased composition (basic residues). Residues Pro-354–Thr-366 show a composition bias toward low complexity. Basic residues predominate over residues Arg-367–Lys-382. Ser-445 and Ser-455 each carry phosphoserine. Disordered stretches follow at residues Lys-534–Val-600, Ser-644–Gln-871, Phe-888–Leu-1240, and Ile-1281–Arg-1395. Polar residues predominate over residues Ser-568–Ser-589. Composition is skewed to basic and acidic residues over residues Ile-685–Ala-697 and Thr-727–Gly-742. Residues Ala-786–Phe-796 show a composition bias toward polar residues. Basic and acidic residues predominate over residues Pro-802–Asn-812. Phosphoserine is present on residues Ser-814, Ser-845, Ser-846, Ser-864, Ser-867, and Ser-915. 2 stretches are compositionally biased toward polar residues: residues Pro-835 to Glu-848 and Ile-859 to Gln-871. Position 917 is a phosphothreonine (Thr-917). Ser-936, Ser-973, and Ser-991 each carry phosphoserine. Residues Arg-988 to Ser-999 show a composition bias toward low complexity. Basic residues predominate over residues Arg-1000–Ser-1011. The span at Arg-1012–Ser-1030 shows a compositional bias: basic and acidic residues. A compositionally biased stretch (basic residues) spans Arg-1043–Arg-1053. Positions Ser-1054 to Glu-1063 are enriched in basic and acidic residues. Residues Arg-1064–Arg-1090 are compositionally biased toward basic residues. Positions Ser-1091–Tyr-1101 are enriched in low complexity. Basic residues predominate over residues Ser-1106–Pro-1118. Residues Ser-1124 and Ser-1128 each carry the phosphoserine modification. 2 stretches are compositionally biased toward basic and acidic residues: residues Arg-1141–Ser-1151 and Arg-1181–Val-1198. A phosphoserine mark is found at Ser-1202 and Ser-1229. Residues Asp-1284–Ser-1297 are compositionally biased toward low complexity. Over residues His-1345–Glu-1356 the composition is skewed to basic and acidic residues. Residues Ser-1359, Ser-1360, and Ser-1371 each carry the phosphoserine modification. A Phosphothreonine modification is found at Thr-1404. 4 disordered regions span residues Leu-1407–Glu-1439, Phe-1455–Ser-1486, Thr-1526–Lys-1556, and Met-1630–Gly-1649. Over residues Pro-1531–Asn-1540 the composition is skewed to polar residues. The span at Ser-1541–Lys-1556 shows a compositional bias: basic and acidic residues. A coiled-coil region spans residues Arg-1549–Lys-1579.

As to quaternary structure, interacts with POLR2A (via the C-terminal domain).

This chain is PHD and RING finger domain-containing protein 1 (PHRF1), found in Homo sapiens (Human).